Consider the following 205-residue polypeptide: Histidine biosynthesis bifunctional protein HisIE (205 aa).

Residues 1–115 are phosphoribosyl-AMP cyclohydrolase; sequence MIDIKELKFD…DEETEDGIEI (115 aa). The interval 116-205 is phosphoribosyl-ATP pyrophosphohydrolase; the sequence is LNKLYERIKG…YNELERRYKK (90 aa).

The protein in the N-terminal section; belongs to the PRA-CH family. This sequence in the C-terminal section; belongs to the PRA-PH family.

The protein resides in the cytoplasm. It catalyses the reaction 1-(5-phospho-beta-D-ribosyl)-ATP + H2O = 1-(5-phospho-beta-D-ribosyl)-5'-AMP + diphosphate + H(+). The enzyme catalyses 1-(5-phospho-beta-D-ribosyl)-5'-AMP + H2O = 1-(5-phospho-beta-D-ribosyl)-5-[(5-phospho-beta-D-ribosylamino)methylideneamino]imidazole-4-carboxamide. It functions in the pathway amino-acid biosynthesis; L-histidine biosynthesis; L-histidine from 5-phospho-alpha-D-ribose 1-diphosphate: step 2/9. It participates in amino-acid biosynthesis; L-histidine biosynthesis; L-histidine from 5-phospho-alpha-D-ribose 1-diphosphate: step 3/9. This is Histidine biosynthesis bifunctional protein HisIE from Caldanaerobacter subterraneus subsp. tengcongensis (strain DSM 15242 / JCM 11007 / NBRC 100824 / MB4) (Thermoanaerobacter tengcongensis).